The chain runs to 73 residues: Large ribosomal subunit protein bL31 (73 aa).

The Zn(2+) site is built by Cys-16, Cys-18, Cys-37, and Cys-40.

It belongs to the bacterial ribosomal protein bL31 family. Type A subfamily. As to quaternary structure, part of the 50S ribosomal subunit. It depends on Zn(2+) as a cofactor.

Its function is as follows. Binds the 23S rRNA. In Pseudomonas savastanoi pv. phaseolicola (strain 1448A / Race 6) (Pseudomonas syringae pv. phaseolicola (strain 1448A / Race 6)), this protein is Large ribosomal subunit protein bL31.